A 144-amino-acid chain; its full sequence is Cysteine-rich tail protein 1 (144 aa).

The interval 51–105 is disordered; that stretch reads APEPTHLLQPTEVPGPKGAKGNQGAAPIQNQQAWQQPGNPYSSSQRQAGLTYAGP. The span at 78 to 98 shows a compositional bias: polar residues; it reads IQNQQAWQQPGNPYSSSQRQA.

This sequence belongs to the CYSRT1 family. In terms of assembly, interacts with LCE1B; the interaction is direct. Interacts with LCE2C; the interaction is direct. Interacts with LCE3A; the interaction is direct. Interacts with LCE3C; the interaction is direct. Interacts with LCE4A; the interaction is direct. Interacts with LCE5A; the interaction is direct. Interacts with LCE1C. Interacts with LCE1D. Interacts with LCE1E. Interacts with LCE2A. Interacts with LCE3D. Interacts with LCE3E. Interacts with LCE1A. In terms of tissue distribution, expressed in the stratum granulosum, in skin and oral epithelia (at protein level).

The protein localises to the cornified envelope. In terms of biological role, component of the stratum corneum that may contribute to epidermal antimicrobial host defenses. The protein is Cysteine-rich tail protein 1 (CYSRT1) of Homo sapiens (Human).